The sequence spans 360 residues: Variable large protein 18 (360 aa).

The signal sequence occupies residues 1 to 26 (MRKRISAIINKLNISIMMMIVVLMIG). Cys-27 carries the N-palmitoyl cysteine lipid modification. Cys-27 carries the S-diacylglycerol cysteine lipid modification.

The protein belongs to the variable large protein (Vlp) family. Alpha subfamily.

The protein resides in the cell outer membrane. Functionally, the Vlp and Vsp proteins are antigenically distinct proteins, only one vlp or vsp gene is transcriptionally active at any one time. Switching between these genes is a mechanism of host immune response evasion. The sequence is that of Variable large protein 18 from Borrelia hermsii.